Reading from the N-terminus, the 86-residue chain is Toxin ICK-18 (86 aa).

A signal peptide spans 1-19; the sequence is MKTIFALVFCCAIAVVVLG. 4 disulfides stabilise this stretch: cysteine 35-cysteine 49, cysteine 42-cysteine 61, cysteine 48-cysteine 76, and cysteine 79-cysteine 86.

It belongs to the neurotoxin 21 family. As to expression, expressed by the venom gland.

Its subcellular location is the secreted. In terms of biological role, probable neurotoxin with ion channel impairing activity. This chain is Toxin ICK-18, found in Trittame loki (Brush-footed trapdoor spider).